A 245-amino-acid polypeptide reads, in one-letter code: Ribosomal RNA small subunit methyltransferase G (245 aa).

Residues G85, F90, 108–110, 136–137, and R155 each bind S-adenosyl-L-methionine; these read DST and AE.

This sequence belongs to the methyltransferase superfamily. RNA methyltransferase RsmG family.

The protein localises to the cytoplasm. Its function is as follows. Specifically methylates the N7 position of a guanine in 16S rRNA. The sequence is that of Ribosomal RNA small subunit methyltransferase G from Trichormus variabilis (strain ATCC 29413 / PCC 7937) (Anabaena variabilis).